The sequence spans 608 residues: ATM1-type heavy metal exporter (608 aa).

Residues 1–38 (MPPETATNPKDARHDGWQTLKRFLPYLWPADNAVLRRR) are Cytoplasmic-facing. Residues 39–60 (VVGAILMVLLGKATTLALPFAY) form a helical membrane-spanning segment. Positions 39–327 (VVGAILMVLL…LGMVYRTIRQ (289 aa)) constitute an ABC transmembrane type-1 domain. At 61 to 82 (KKAVDAMTLGGGAQPALTVALA) the chain is on the periplasmic side. A helical transmembrane segment spans residues 83–105 (FVLAYALGRFSGVLFDNLRNIVF). Residues 106-154 (ERVGQDATRHLAENVFARLHKLSLRFHLARRTGEVTKVIERGTKSIDTM) are Cytoplasmic-facing. A helical membrane pass occupies residues 155–178 (LYFLLFNIAPTVIELTAVIVIFWL). Residue N179 is a topological domain, periplasmic. A helical transmembrane segment spans residues 180–202 (FGLGLVTATILAVIAYVWTTRTI). Topologically, residues 203 to 266 (TEWRTHLREK…AAVKSENSLG (64 aa)) are cytoplasmic. Glutathione-binding positions include 206–210 (RTHLR) and 269–272 (NIAQ). Residues 267-285 (LLNIAQALIVNLLMAGAMA) form a helical membrane-spanning segment. The Periplasmic portion of the chain corresponds to 286-300 (WTVYGWSQGKLTVGD). Residues 301 to 322 (LVFVNTYLTQLFRPLDMLGMVY) form a helical membrane-spanning segment. Position 316–319 (316–319 (DMLG)) interacts with glutathione. The Cytoplasmic portion of the chain corresponds to 323–608 (RTIRQGLIDM…ESAEVSEAAE (286 aa)). One can recognise an ABC transporter domain in the interval 361–595 (VTFDNVVFGY…DGLYAEMWAR (235 aa)). ATP contacts are provided by residues Y370 and 394–405 (GPSGAGKSTIAR).

It belongs to the ABC transporter superfamily. ABCB family. Heavy Metal importer (TC 3.A.1.210) subfamily. As to quaternary structure, homodimer.

Its subcellular location is the cell inner membrane. Mediates the ATP-dependent export of glutathione-conjugated substrates, such as heavy metal-glutathione conjugates. ATP hydrolysis is stimulated by glutathione binding. Protects cells against toxic heavy metal ions, such as silver and mercury ions. May also mediate the transport of glutathione-conjugated aromatic hydrocarbons, such as dinitrobenzene. The polypeptide is ATM1-type heavy metal exporter (atm1) (Novosphingobium aromaticivorans (strain ATCC 700278 / DSM 12444 / CCUG 56034 / CIP 105152 / NBRC 16084 / F199)).